The following is a 74-amino-acid chain: UPF0435 protein BCB4264_A0471 (74 aa).

Belongs to the UPF0435 family.

The protein is UPF0435 protein BCB4264_A0471 of Bacillus cereus (strain B4264).